Here is a 481-residue protein sequence, read N- to C-terminus: Sulfate adenylyltransferase subunit 1 (481 aa).

The region spanning 22–236 is the tr-type G domain; it reads KDLLRFITCG…LLDSIRLDAD (215 aa). Residues 31–38 form a G1 region; sequence GSVDDGKS. 31 to 38 is a binding site for GTP; the sequence is GSVDDGKS. The interval 89–93 is G2; it reads GITID. The segment at 110-113 is G3; it reads DCPG. GTP contacts are provided by residues 110–114 and 165–168; these read DCPGH and NKMD. Residues 165–168 are G4; that stretch reads NKMD. Positions 202-204 are G5; it reads SAL.

The protein belongs to the TRAFAC class translation factor GTPase superfamily. Classic translation factor GTPase family. CysN/NodQ subfamily. In terms of assembly, heterodimer composed of CysD, the smaller subunit, and CysN.

The enzyme catalyses sulfate + ATP + H(+) = adenosine 5'-phosphosulfate + diphosphate. It functions in the pathway sulfur metabolism; hydrogen sulfide biosynthesis; sulfite from sulfate: step 1/3. With CysD forms the ATP sulfurylase (ATPS) that catalyzes the adenylation of sulfate producing adenosine 5'-phosphosulfate (APS) and diphosphate, the first enzymatic step in sulfur assimilation pathway. APS synthesis involves the formation of a high-energy phosphoric-sulfuric acid anhydride bond driven by GTP hydrolysis by CysN coupled to ATP hydrolysis by CysD. In Laribacter hongkongensis (strain HLHK9), this protein is Sulfate adenylyltransferase subunit 1.